We begin with the raw amino-acid sequence, 401 residues long: G2/mitotic-specific cyclin-B1 (401 aa).

The protein belongs to the cyclin family. Cyclin AB subfamily. As to quaternary structure, interacts with the CDK1 protein kinase to form a serine/threonine kinase holoenzyme complex also known as maturation promoting factor (MPF). The cyclin subunit imparts substrate specificity to the complex.

Functionally, essential for the control of the cell cycle at the G2/M (mitosis) transition. In Oryzias luzonensis (Luzon ricefish), this protein is G2/mitotic-specific cyclin-B1 (ccnb1).